Reading from the N-terminus, the 192-residue chain is LexA repressor (192 aa).

Positions 15 to 35 (RAEIARELGFRSANAAEEHLK) form a DNA-binding region, H-T-H motif. Catalysis depends on for autocatalytic cleavage activity residues Ser-109 and Lys-146.

The protein belongs to the peptidase S24 family. In terms of assembly, homodimer.

The catalysed reaction is Hydrolysis of Ala-|-Gly bond in repressor LexA.. Represses a number of genes involved in the response to DNA damage (SOS response), including recA and lexA. In the presence of single-stranded DNA, RecA interacts with LexA causing an autocatalytic cleavage which disrupts the DNA-binding part of LexA, leading to derepression of the SOS regulon and eventually DNA repair. The chain is LexA repressor from Photobacterium profundum (strain SS9).